The chain runs to 247 residues: MSKLFWAMLAFISRLPVPSRWSQGLDFEQYSRGIVMFPFIGLILGGVSGLIFILLQSWCGIPLAALFCILALALLTGGFHLDGLADTCDGIFSARRRERMLEIMRDSRLGTHGGLALIFVLLAKILVVSELALRGTPMLAALAAACAAGRGSAVLLMYHHRYARDEGLGNVFIGKVSGRQTCITLGLAVIVATVLLPGMQGLAAMVVTLAAIFILGQLLKRTLGGQTGDTLGAAIELGELIFLLALL.

6 helical membrane-spanning segments follow: residues 34–54 (IVMFPFIGLILGGVSGLIFIL), 59–79 (CGIPLAALFCILALALLTGGF), 113–133 (GGLALIFVLLAKILVVSELAL), 138–158 (MLAALAAACAAGRGSAVLLMY), 171–191 (VFIGKVSGRQTCITLGLAVIV), and 194–214 (VLLPGMQGLAAMVVTLAAIFI).

It belongs to the CobS family. The cofactor is Mg(2+).

The protein resides in the cell inner membrane. The catalysed reaction is alpha-ribazole + adenosylcob(III)inamide-GDP = adenosylcob(III)alamin + GMP + H(+). The enzyme catalyses alpha-ribazole 5'-phosphate + adenosylcob(III)inamide-GDP = adenosylcob(III)alamin 5'-phosphate + GMP + H(+). It functions in the pathway cofactor biosynthesis; adenosylcobalamin biosynthesis; adenosylcobalamin from cob(II)yrinate a,c-diamide: step 7/7. Joins adenosylcobinamide-GDP and alpha-ribazole to generate adenosylcobalamin (Ado-cobalamin). Also synthesizes adenosylcobalamin 5'-phosphate from adenosylcobinamide-GDP and alpha-ribazole 5'-phosphate. The chain is Adenosylcobinamide-GDP ribazoletransferase from Salmonella schwarzengrund (strain CVM19633).